A 499-amino-acid chain; its full sequence is Low-affinity inorganic phosphate transporter PitA (499 aa).

The Periplasmic segment spans residues 1–4 (MLHL). Residues 5–25 (FAGLDLHTGLLLLLALAFVLF) form a helical membrane-spanning segment. Topologically, residues 26-51 (YEAINGFHDTANAVATVIYTRAMRSQ) are cytoplasmic. A helical transmembrane segment spans residues 52–72 (LAVVMAAVFNFLGVLLGGLSV). Topologically, residues 73 to 93 (AYAIVHMLPTDLLLNMGSSHG) are periplasmic. The chain crosses the membrane as a helical span at residues 94 to 114 (LAMVFSMLLAAIIWNLGTWYF). Over 115–123 (GLPASSSHT) the chain is Cytoplasmic. A helical membrane pass occupies residues 124 to 144 (LIGAIIGIGLTNALMTGTSVV). The Periplasmic portion of the chain corresponds to 145–154 (DALNIPKVLS). A helical transmembrane segment spans residues 155 to 175 (IFGSLIVSPIVGLVFAGGLIF). Over 176-206 (LLRRYWSGTKKRARIHLTPAEREKKDGKKKP) the chain is Cytoplasmic. A helical transmembrane segment spans residues 207–227 (PFWTRIALILSAIGVAFSHGA). At 228 to 232 (NDGQK) the chain is on the periplasmic side. Residues 233–253 (GIGLVMLVLIGVAPAGFVVNM) form a helical membrane-spanning segment. The Cytoplasmic portion of the chain corresponds to 254–381 (NATGYEITRT…KSDMLSTIEY (128 aa)). The chain crosses the membrane as a helical span at residues 382 to 402 (APVWIIMAVALALGIGTMIGW). The Periplasmic portion of the chain corresponds to 403-429 (RRVATTIGEKIGKKGMTYAQGMSAQMT). A helical membrane pass occupies residues 430 to 450 (AAVSIGLASYTGMPVSTTHVL). Residues 451–472 (SSSVAGTMVVDGGGLQRKTVTS) lie on the Cytoplasmic side of the membrane. Residues 473-493 (ILMAWVFTLPAAVLLSGGLYW) traverse the membrane as a helical segment. The Periplasmic segment spans residues 494–499 (LSLQFL).

Belongs to the inorganic phosphate transporter (PiT) (TC 2.A.20) family. Pit subfamily.

It localises to the cell inner membrane. The catalysed reaction is phosphate(in) + H(+)(in) = phosphate(out) + H(+)(out). Low-affinity inorganic phosphate transporter. This chain is Low-affinity inorganic phosphate transporter PitA (pitA), found in Escherichia coli O157:H7.